We begin with the raw amino-acid sequence, 562 residues long: Potassium-transporting ATPase potassium-binding subunit (562 aa).

12 consecutive transmembrane segments (helical) span residues 6 to 26 (FLLI…LGGF), 62 to 82 (YALA…VLLM), 132 to 152 (GLTV…FALI), 175 to 195 (LYVL…QGVL), 253 to 273 (FVQM…FGQV), 283 to 303 (LIWA…YAEL), 327 to 347 (FGIL…CGAV), 356 to 376 (ALGG…FGGV), 379 to 399 (GLYG…LMIG), 416 to 436 (MTAL…ALAL), 483 to 503 (LLLA…VLAI), and 526 to 546 (LFIG…FIPA).

Belongs to the KdpA family. In terms of assembly, the system is composed of three essential subunits: KdpA, KdpB and KdpC.

The protein localises to the cell inner membrane. Its function is as follows. Part of the high-affinity ATP-driven potassium transport (or Kdp) system, which catalyzes the hydrolysis of ATP coupled with the electrogenic transport of potassium into the cytoplasm. This subunit binds the periplasmic potassium ions and delivers the ions to the membrane domain of KdpB through an intramembrane tunnel. The chain is Potassium-transporting ATPase potassium-binding subunit from Yersinia pseudotuberculosis serotype I (strain IP32953).